We begin with the raw amino-acid sequence, 147 residues long: Large ribosomal subunit protein bL9 (147 aa).

The protein belongs to the bacterial ribosomal protein bL9 family.

Binds to the 23S rRNA. This is Large ribosomal subunit protein bL9 from Exiguobacterium sp. (strain ATCC BAA-1283 / AT1b).